Here is a 103-residue protein sequence, read N- to C-terminus: Small ubiquitin-related modifier 3 (103 aa).

Residues Lys-5 and Lys-7 each participate in a glycyl lysine isopeptide (Lys-Gly) (interchain with G-Cter in SUMO2) cross-link. Lys-11 participates in a covalent cross-link: Glycyl lysine isopeptide (Lys-Gly) (interchain with G-Cter in SUMO); alternate. Lys-11 participates in a covalent cross-link: Glycyl lysine isopeptide (Lys-Gly) (interchain with G-Cter in SUMO2); alternate. The 78-residue stretch at Asp-15 to Gly-92 folds into the Ubiquitin-like domain. Residue Gly-92 forms a Glycyl lysine isopeptide (Gly-Lys) (interchain with K-? in acceptor proteins) linkage. A propeptide spanning residues Val-93–Phe-103 is cleaved from the precursor.

This sequence belongs to the ubiquitin family. SUMO subfamily. Covalently attached to a number of proteins. Interacts with BMAL1. Interacts with USP25 (via ts SIM domain); the interaction sumoylates USP25 and inhibits its ubiquitin hydrolyzing activity. Interacts with SAE2 and UBE2I. Post-translationally, polymeric chains can be formed through Lys-11 cross-linking. In terms of processing, cleavage of precursor form by SENP1, SENP2 or SENP5 is necessary for function. In terms of tissue distribution, expressed predominantly in liver.

Its subcellular location is the cytoplasm. It localises to the nucleus. The protein localises to the PML body. Functionally, ubiquitin-like protein which can be covalently attached to target lysines either as a monomer or as a lysine-linked polymer. Does not seem to be involved in protein degradation and may function as an antagonist of ubiquitin in the degradation process. Plays a role in a number of cellular processes such as nuclear transport, DNA replication and repair, mitosis and signal transduction. Covalent attachment to its substrates requires prior activation by the E1 complex SAE1-SAE2 and linkage to the E2 enzyme UBE2I, and can be promoted by an E3 ligase such as PIAS1-4, RANBP2 or CBX4. Plays a role in the regulation of sumoylation status of SETX. The sequence is that of Small ubiquitin-related modifier 3 from Homo sapiens (Human).